Consider the following 213-residue polypeptide: Uridine kinase (213 aa).

Position 15–22 (15–22 (GASASGKS)) interacts with ATP.

Belongs to the uridine kinase family.

It is found in the cytoplasm. The enzyme catalyses uridine + ATP = UMP + ADP + H(+). It catalyses the reaction cytidine + ATP = CMP + ADP + H(+). It functions in the pathway pyrimidine metabolism; CTP biosynthesis via salvage pathway; CTP from cytidine: step 1/3. It participates in pyrimidine metabolism; UMP biosynthesis via salvage pathway; UMP from uridine: step 1/1. The sequence is that of Uridine kinase from Sodalis glossinidius (strain morsitans).